The following is a 161-amino-acid chain: Nucleotide-binding protein Bcep1808_2648 (161 aa).

It belongs to the YajQ family.

Functionally, nucleotide-binding protein. In Burkholderia vietnamiensis (strain G4 / LMG 22486) (Burkholderia cepacia (strain R1808)), this protein is Nucleotide-binding protein Bcep1808_2648.